A 202-amino-acid chain; its full sequence is Small ribosomal subunit protein uS4c (202 aa).

The 62-residue stretch at 90-151 folds into the S4 RNA-binding domain; the sequence is MRLDNTIFRL…KQKSRFIITK (62 aa).

The protein belongs to the universal ribosomal protein uS4 family. Part of the 30S ribosomal subunit. Contacts protein S5. The interaction surface between S4 and S5 is involved in control of translational fidelity.

It is found in the plastid. The protein localises to the chloroplast. One of the primary rRNA binding proteins, it binds directly to 16S rRNA where it nucleates assembly of the body of the 30S subunit. Its function is as follows. With S5 and S12 plays an important role in translational accuracy. In Plagiochila adianthoides (Liverwort), this protein is Small ribosomal subunit protein uS4c (rps4).